The following is a 175-amino-acid chain: MIRMDGIYKKYLSIIFDPAFYINRNRLNLPSELLENGVIRSEINNLIINKYDLNCDIEPLSGVTAMFVANWNLLPAVAYFIGSQESRLINHSEMVISYYGGKISKQGEAAIRSGFWHLIAWKENISVGIYERINLLFNPIALEGNYTPVERNLSRLNEGMQYAKRHFTGIQTSCL.

Its function is as follows. Necessary for the secretion of IPA invasins. The sequence is that of Protein MxiK (mxiK) from Shigella flexneri.